Here is a 101-residue protein sequence, read N- to C-terminus: Large ribosomal subunit protein uL23 (101 aa).

The protein belongs to the universal ribosomal protein uL23 family. As to quaternary structure, part of the 50S ribosomal subunit. Contacts protein L29, and trigger factor when it is bound to the ribosome.

One of the early assembly proteins it binds 23S rRNA. One of the proteins that surrounds the polypeptide exit tunnel on the outside of the ribosome. Forms the main docking site for trigger factor binding to the ribosome. In Corynebacterium diphtheriae (strain ATCC 700971 / NCTC 13129 / Biotype gravis), this protein is Large ribosomal subunit protein uL23.